Consider the following 346-residue polypeptide: Endosome-associated-trafficking regulator 1 (346 aa).

The segment covering 46-67 has biased composition (polar residues); sequence FVSSNSKRAFSKDSNQSTTQFR. 3 disordered regions span residues 46 to 77, 93 to 129, and 153 to 173; these read FVSS…DGNL, LQED…GDES, and SPPA…SDSE. The stretch at 170–317 forms a coiled coil; that stretch reads SDSEEGLRLL…SGAQSSIKQL (148 aa).

This sequence belongs to the ENTR1 family.

It localises to the cytoplasm. The protein localises to the early endosome. It is found in the endosome. The protein resides in the recycling endosome. Its subcellular location is the midbody. It localises to the cytoskeleton. The protein localises to the microtubule organizing center. It is found in the centrosome. The protein resides in the cilium basal body. Endosome-associated protein that plays a role in membrane receptor sorting, cytokinesis and ciliogenesis. The chain is Endosome-associated-trafficking regulator 1 from Xenopus tropicalis (Western clawed frog).